The chain runs to 448 residues: 5-hydroxytryptamine receptor 7 (448 aa).

Residues Met-1–Val-86 lie on the Extracellular side of the membrane. 2 N-linked (GlcNAc...) asparagine glycosylation sites follow: Asn-5 and Asn-69. The helical transmembrane segment at Ile-87 to Phe-111 threads the bilayer. Residues Val-112–Tyr-121 are Cytoplasmic-facing. A helical membrane pass occupies residues Leu-122–Val-143. Topologically, residues Thr-144–His-155 are extracellular. Residues Phe-156–Ile-181 form a helical membrane-spanning segment. A disulfide bond links Cys-158 and Cys-234. Residue Asp-165 coordinates serotonin. Residues Asp-182 to Cys-201 lie on the Cytoplasmic side of the membrane. The helical transmembrane segment at Met-202–Phe-222 threads the bilayer. The Extracellular portion of the chain corresponds to Gly-223–Phe-240. The chain crosses the membrane as a helical span at residues Gly-241–Tyr-263. The Cytoplasmic portion of the chain corresponds to Gln-264–Ala-329. A helical transmembrane segment spans residues Thr-330 to Phe-355. The Extracellular portion of the chain corresponds to Ile-356–Leu-366. A helical transmembrane segment spans residues Trp-367–Phe-390. Residues Asn-391–Thr-448 are Cytoplasmic-facing. Residue Cys-404 is the site of S-palmitoyl cysteine attachment.

The protein belongs to the G-protein coupled receptor 1 family. Thalamus, hypothalamus, and the hippocampal rudiments.

Its subcellular location is the cell membrane. In terms of biological role, G-protein coupled receptor for 5-hydroxytryptamine (serotonin), a biogenic hormone that functions as a neurotransmitter, a hormone and a mitogen. Ligand binding causes a conformation change that triggers signaling via guanine nucleotide-binding proteins (G proteins) and modulates the activity of downstream effectors. HTR7 is coupled to G(s) G alpha proteins and mediates activation of adenylate cyclase activity. The polypeptide is 5-hydroxytryptamine receptor 7 (Rattus norvegicus (Rat)).